Here is a 338-residue protein sequence, read N- to C-terminus: Legumin B (338 aa).

The disordered stretch occupies residues 16–162 (SLNTKEDTAK…RQHSKGRKNG (147 aa)). Over residues 18–44 (NTKEDTAKRLRSPQDERGQIVKVEDGL) the composition is skewed to basic and acidic residues. 2 stretches are compositionally biased toward acidic residues: residues 82 to 92 (DEDEDEEEEEE) and 136 to 150 (EEEE…EEEE). In terms of domain architecture, Cupin type-1 spans 174 to 321 (ENIARPSRGD…AFGLRHSQVA (148 aa)).

The protein belongs to the 11S seed storage protein (globulins) family. Hexamer; each subunit is composed of an acidic and a basic chain derived from a single precursor and linked by a disulfide bond.

Functionally, this protein found in the seeds of many leguminous and non-leguminous plants is the source of sulfur-containing amino acids in seed meals. This is Legumin B (LEGB) from Pisum sativum (Garden pea).